The sequence spans 232 residues: A-type ATP synthase subunit D (232 aa).

Residues 200-232 (KKIKNKKEAEEEDEDEDESEMTDETVVQTPADD) form a disordered region. Residues 209-222 (EEEDEDEDESEMTD) show a composition bias toward acidic residues.

Belongs to the V-ATPase D subunit family. Has multiple subunits with at least A(3), B(3), C, D, E, F, H, I and proteolipid K(x).

The protein localises to the cell membrane. Functionally, component of the A-type ATP synthase that produces ATP from ADP in the presence of a proton gradient across the membrane. This chain is A-type ATP synthase subunit D, found in Haloquadratum walsbyi (strain DSM 16790 / HBSQ001).